We begin with the raw amino-acid sequence, 225 residues long: uncharacterized protein (225 aa).

This is an uncharacterized protein from Ureaplasma parvum serovar 3 (strain ATCC 700970).